A 419-amino-acid polypeptide reads, in one-letter code: Creatine kinase S-type, mitochondrial (419 aa).

A mitochondrion-targeting transit peptide spans 1–39; that stretch reads MASTFSKLLTGRNASLLFATLGTSALTTGYLVNRQKVCA. The interval 40–64 is cardiolipin-binding; the sequence is EARDQHKLFPPSADYPDLRKHNNCM. Residues 46–132 form the Phosphagen kinase N-terminal domain; that stretch reads KLFPPSADYP…FDPVIKLRHN (87 aa). The Phosphagen kinase C-terminal domain occupies 159-401; that stretch reads YVLSSRVRTG…NYLVDCEKKL (243 aa). ATP is bound by residues 162-166 and His-225; that span reads SSRVR. Tyr-255 is subject to Phosphotyrosine. ATP is bound by residues Arg-270, Arg-326, 354–359, and Asp-369; that span reads RGTGGV. Position 356 is a phosphothreonine (Thr-356).

It belongs to the ATP:guanido phosphotransferase family. In terms of assembly, exists as an octamer composed of four CKMT2 homodimers.

The protein localises to the mitochondrion inner membrane. The catalysed reaction is creatine + ATP = N-phosphocreatine + ADP + H(+). In terms of biological role, reversibly catalyzes the transfer of phosphate between ATP and various phosphogens (e.g. creatine phosphate). Creatine kinase isoenzymes play a central role in energy transduction in tissues with large, fluctuating energy demands, such as skeletal muscle, heart, brain and spermatozoa. This chain is Creatine kinase S-type, mitochondrial (CKMT2), found in Oryctolagus cuniculus (Rabbit).